Consider the following 885-residue polypeptide: Leucine--tRNA ligase (885 aa).

The 'HIGH' region motif lies at 43-53 (PYTSGQLHMGH). Positions 571 to 575 (KMSKS) match the 'KMSKS' region motif. Lys574 is a binding site for ATP. The tract at residues 866–885 (SVANKAEPGRPAIHVDEADD) is disordered.

This sequence belongs to the class-I aminoacyl-tRNA synthetase family.

It is found in the cytoplasm. The catalysed reaction is tRNA(Leu) + L-leucine + ATP = L-leucyl-tRNA(Leu) + AMP + diphosphate. In Halobacterium salinarum (strain ATCC 700922 / JCM 11081 / NRC-1) (Halobacterium halobium), this protein is Leucine--tRNA ligase.